The sequence spans 425 residues: CinA-like protein (425 aa).

The protein belongs to the CinA family.

In Trichodesmium erythraeum (strain IMS101), this protein is CinA-like protein.